The sequence spans 201 residues: NADH-ubiquinone oxidoreductase 21.3 kDa subunit (201 aa).

As to quaternary structure, complex I is composed of about 40 different subunits.

It is found in the mitochondrion inner membrane. The enzyme catalyses a ubiquinone + NADH + 5 H(+)(in) = a ubiquinol + NAD(+) + 4 H(+)(out). Transfer of electrons from NADH to the respiratory chain. The immediate electron acceptor for the enzyme is believed to be ubiquinone. In Neurospora crassa (strain ATCC 24698 / 74-OR23-1A / CBS 708.71 / DSM 1257 / FGSC 987), this protein is NADH-ubiquinone oxidoreductase 21.3 kDa subunit.